The primary structure comprises 350 residues: Protein RecA (350 aa).

Position 66–73 (66–73 (GPESSGKT)) interacts with ATP.

The protein belongs to the RecA family.

The protein localises to the cytoplasm. Functionally, can catalyze the hydrolysis of ATP in the presence of single-stranded DNA, the ATP-dependent uptake of single-stranded DNA by duplex DNA, and the ATP-dependent hybridization of homologous single-stranded DNAs. It interacts with LexA causing its activation and leading to its autocatalytic cleavage. This is Protein RecA from Nocardioides sp. (strain ATCC BAA-499 / JS614).